Reading from the N-terminus, the 300-residue chain is Geranylgeranyl pyrophosphate synthase (300 aa).

Met1 is modified (N-acetylmethionine). Isopentenyl diphosphate is bound by residues Lys25, Arg28, and His57. Positions 64 and 68 each coordinate Mg(2+). Residue Arg73 participates in dimethylallyl diphosphate binding. Arg74 is an isopentenyl diphosphate binding site. The dimethylallyl diphosphate site is built by Lys151, Thr152, Gln185, Lys202, and Lys212.

It belongs to the FPP/GGPP synthase family. Homohexamer; trimer of homodimers. Mg(2+) serves as cofactor.

The protein localises to the cytoplasm. Its subcellular location is the perinuclear region. It localises to the myofibril. The protein resides in the sarcomere. It is found in the z line. It catalyses the reaction isopentenyl diphosphate + dimethylallyl diphosphate = (2E)-geranyl diphosphate + diphosphate. The catalysed reaction is isopentenyl diphosphate + (2E)-geranyl diphosphate = (2E,6E)-farnesyl diphosphate + diphosphate. The enzyme catalyses isopentenyl diphosphate + (2E,6E)-farnesyl diphosphate = (2E,6E,10E)-geranylgeranyl diphosphate + diphosphate. Its pathway is isoprenoid biosynthesis; farnesyl diphosphate biosynthesis; farnesyl diphosphate from geranyl diphosphate and isopentenyl diphosphate: step 1/1. It participates in isoprenoid biosynthesis; geranyl diphosphate biosynthesis; geranyl diphosphate from dimethylallyl diphosphate and isopentenyl diphosphate: step 1/1. It functions in the pathway isoprenoid biosynthesis; geranylgeranyl diphosphate biosynthesis; geranylgeranyl diphosphate from farnesyl diphosphate and isopentenyl diphosphate: step 1/1. Functionally, catalyzes the trans-addition of the three molecules of isopentenyl diphosphate (IPP) onto dimethylallyl pyrophosphate (DMAPP) to form geranylgeranyl pyrophosphate, an important precursor of carotenoids and geranylated proteins. This is Geranylgeranyl pyrophosphate synthase from Mus musculus (Mouse).